The following is a 184-amino-acid chain: uncharacterized protein (184 aa).

The chain crosses the membrane as a helical span at residues 5-27 (YLLATAMFLIVCVYVISETVNLH).

It localises to the membrane. This is an uncharacterized protein from Methanocaldococcus jannaschii (strain ATCC 43067 / DSM 2661 / JAL-1 / JCM 10045 / NBRC 100440) (Methanococcus jannaschii).